Here is a 378-residue protein sequence, read N- to C-terminus: Succinate--CoA ligase [ADP-forming] subunit beta (378 aa).

The ATP-grasp domain maps to 9–237 (RDIVARYGIP…IAGEPESEIK (229 aa)). Residues Lys-45, 52–54 (GRG), Ile-94, and Glu-99 each bind ATP. 2 residues coordinate Mg(2+): Asn-192 and Asp-206. Residues Asn-257 and 314–316 (GIT) contribute to the substrate site.

Belongs to the succinate/malate CoA ligase beta subunit family. As to quaternary structure, heterotetramer of two alpha and two beta subunits. Mg(2+) serves as cofactor.

It catalyses the reaction succinate + ATP + CoA = succinyl-CoA + ADP + phosphate. The catalysed reaction is GTP + succinate + CoA = succinyl-CoA + GDP + phosphate. It functions in the pathway carbohydrate metabolism; tricarboxylic acid cycle; succinate from succinyl-CoA (ligase route): step 1/1. Its function is as follows. Succinyl-CoA synthetase functions in the citric acid cycle (TCA), coupling the hydrolysis of succinyl-CoA to the synthesis of either ATP or GTP and thus represents the only step of substrate-level phosphorylation in the TCA. The beta subunit provides nucleotide specificity of the enzyme and binds the substrate succinate, while the binding sites for coenzyme A and phosphate are found in the alpha subunit. The polypeptide is Succinate--CoA ligase [ADP-forming] subunit beta (Herpetosiphon aurantiacus (strain ATCC 23779 / DSM 785 / 114-95)).